Reading from the N-terminus, the 354-residue chain is Chorismate synthase (354 aa).

NADP(+) is bound at residue Arg46. FMN contacts are provided by residues 123–125, 239–240, Gly284, 299–303, and Arg325; these read RSS, NA, and KPVAT.

This sequence belongs to the chorismate synthase family. Homotetramer. FMNH2 serves as cofactor.

It catalyses the reaction 5-O-(1-carboxyvinyl)-3-phosphoshikimate = chorismate + phosphate. The protein operates within metabolic intermediate biosynthesis; chorismate biosynthesis; chorismate from D-erythrose 4-phosphate and phosphoenolpyruvate: step 7/7. Catalyzes the anti-1,4-elimination of the C-3 phosphate and the C-6 proR hydrogen from 5-enolpyruvylshikimate-3-phosphate (EPSP) to yield chorismate, which is the branch point compound that serves as the starting substrate for the three terminal pathways of aromatic amino acid biosynthesis. This reaction introduces a second double bond into the aromatic ring system. The chain is Chorismate synthase from Azobacteroides pseudotrichonymphae genomovar. CFP2.